The primary structure comprises 353 residues: N-terminal EF-hand calcium-binding protein 3 (353 aa).

The region spanning 27–62 (AGHALFQDVFRRADKNDDGKLSFEEFQNYFADGVLS) is the EF-hand domain. Residues Asp-40, Asn-42, Asp-44, Lys-46, and Glu-51 each contribute to the Ca(2+) site. The tract at residues 172–181 (IKAQSRPCGS) is required for interaction with APBA3. Positions 193-203 (SWSPSWSPGSS) are enriched in low complexity. Residues 193–213 (SWSPSWSPGSSDTGRSSEAEQ) are disordered. Residues 204–213 (DTGRSSEAEQ) are compositionally biased toward polar residues. Residues 253 to 342 (LVAQRQVQVA…QAPDTLTTVF (90 aa)) form the ABM domain.

Interacts with the N-terminal domain of APBA2. Interacts with NEK2. Interacts with APBA3; APBA3 seems to mediate the interaction between NECAB3 and HIF1AN. In terms of processing, phosphorylated by NEK2. As to expression, widely expressed, with highest levels in the brain.

It is found in the golgi apparatus. In terms of biological role, inhibits the interaction of APBA2 with amyloid-beta precursor protein (APP), and hence allows formation of amyloid-beta. May enhance the activity of HIF1A and thus promote glycolysis under normoxic conditions; the function requires its ABM domain and may implicate the stabilization of the interaction between HIF1AN and APBA3. This chain is N-terminal EF-hand calcium-binding protein 3 (Necab3), found in Mus musculus (Mouse).